Reading from the N-terminus, the 390-residue chain is NADH-quinone oxidoreductase subunit H (390 aa).

The next 9 helical transmembrane spans lie at 4–24, 78–98, 120–140, 157–177, 191–211, 247–266, 278–298, 315–337, and 341–360; these read WLLT…ALLT, LVYT…FGGI, VLAL…GGWA, MISY…LVGS, GWMI…SFAE, YVNM…GGWR, IADI…FVFI, FGWK…YIAF, and WGWW…LLAL.

The protein belongs to the complex I subunit 1 family. NDH-1 is composed of 15 different subunits. Subunits NuoA, H, J, K, L, M, N constitute the membrane sector of the complex.

The protein resides in the cell membrane. The enzyme catalyses a quinone + NADH + 5 H(+)(in) = a quinol + NAD(+) + 4 H(+)(out). In terms of biological role, NDH-1 shuttles electrons from NADH, via FMN and iron-sulfur (Fe-S) centers, to quinones in the respiratory chain. The immediate electron acceptor for the enzyme in this species is believed to be ubiquinone. Couples the redox reaction to proton translocation (for every two electrons transferred, four hydrogen ions are translocated across the cytoplasmic membrane), and thus conserves the redox energy in a proton gradient. This subunit may bind ubiquinone. This Deinococcus deserti (strain DSM 17065 / CIP 109153 / LMG 22923 / VCD115) protein is NADH-quinone oxidoreductase subunit H.